A 118-amino-acid polypeptide reads, in one-letter code: NADH-quinone oxidoreductase subunit A 2 (118 aa).

The next 3 helical transmembrane spans lie at 5 to 25 (YLPI…SLIF), 62 to 82 (IIAM…PWAV), and 87 to 107 (LGMF…VGYI).

It belongs to the complex I subunit 3 family. In terms of assembly, NDH-1 is composed of 14 different subunits. Subunits NuoA, H, J, K, L, M, N constitute the membrane sector of the complex.

The protein localises to the cell inner membrane. The enzyme catalyses a quinone + NADH + 5 H(+)(in) = a quinol + NAD(+) + 4 H(+)(out). Its function is as follows. NDH-1 shuttles electrons from NADH, via FMN and iron-sulfur (Fe-S) centers, to quinones in the respiratory chain. The immediate electron acceptor for the enzyme in this species is believed to be ubiquinone. Couples the redox reaction to proton translocation (for every two electrons transferred, four hydrogen ions are translocated across the cytoplasmic membrane), and thus conserves the redox energy in a proton gradient. This chain is NADH-quinone oxidoreductase subunit A 2, found in Geotalea uraniireducens (strain Rf4) (Geobacter uraniireducens).